We begin with the raw amino-acid sequence, 83 residues long: U5-theraphotoxin-Hs1a 4 (83 aa).

An N-terminal signal peptide occupies residues 1 to 21 (MKTSMFLTLTGLVLLFVDCYA). A propeptide spanning residues 22–49 (SESEEKEFPKELLSSIFAADSDFKVEER) is cleaved from the precursor. Intrachain disulfides connect C51-C63, C56-C68, and C62-C75.

It belongs to the neurotoxin 10 (Hwtx-1) family. 51 (Hntx-8) subfamily. Hntx-8 sub-subfamily. In terms of tissue distribution, expressed by the venom gland.

The protein localises to the secreted. In terms of biological role, agglutinates erythrocytes. This is U5-theraphotoxin-Hs1a 4 from Cyriopagopus schmidti (Chinese bird spider).